We begin with the raw amino-acid sequence, 366 residues long: Ribosomal RNA large subunit methyltransferase M (366 aa).

Residues serine 188, 221–224 (CPGG), aspartate 240, aspartate 260, and aspartate 277 contribute to the S-adenosyl-L-methionine site. Lysine 306 functions as the Proton acceptor in the catalytic mechanism.

The protein belongs to the class I-like SAM-binding methyltransferase superfamily. RNA methyltransferase RlmE family. RlmM subfamily. Monomer.

It localises to the cytoplasm. The enzyme catalyses cytidine(2498) in 23S rRNA + S-adenosyl-L-methionine = 2'-O-methylcytidine(2498) in 23S rRNA + S-adenosyl-L-homocysteine + H(+). In terms of biological role, catalyzes the 2'-O-methylation at nucleotide C2498 in 23S rRNA. The chain is Ribosomal RNA large subunit methyltransferase M from Salmonella newport (strain SL254).